We begin with the raw amino-acid sequence, 202 residues long: 3-isopropylmalate dehydratase small subunit 2 (202 aa).

It belongs to the LeuD family. LeuD type 1 subfamily. Heterodimer of LeuC and LeuD.

The enzyme catalyses (2R,3S)-3-isopropylmalate = (2S)-2-isopropylmalate. The protein operates within amino-acid biosynthesis; L-leucine biosynthesis; L-leucine from 3-methyl-2-oxobutanoate: step 2/4. In terms of biological role, catalyzes the isomerization between 2-isopropylmalate and 3-isopropylmalate, via the formation of 2-isopropylmaleate. The sequence is that of 3-isopropylmalate dehydratase small subunit 2 from Bordetella parapertussis (strain 12822 / ATCC BAA-587 / NCTC 13253).